A 121-amino-acid chain; its full sequence is uncharacterized protein (121 aa).

A run of 3 helical transmembrane segments spans residues 26–46 (YACSIFLLSSYCGNCLTAVAT), 57–77 (SIPLLTLVLLPSTTPSSSVLI), and 90–110 (SFCFTLALLSLLIPPLKLLCV).

It localises to the membrane. This is an uncharacterized protein from Saccharomyces cerevisiae (strain ATCC 204508 / S288c) (Baker's yeast).